The chain runs to 184 residues: MNWRSERIWIELITGSRKTSNFFWACILFLGSLGFLLVGTSSYLGRNLISLFPSQQILFFPQGIVMSFYGIAGLFISSYLWCTIWWNVGSGYDQFDRKEGIVCIFRWGFPGRNRRIFLRFLMRDIQSIRIEVKEGLYPRRVLYMEIRGQGALPLTRIDENLTPREIEQKAAELAYFLRVPIEVF.

The next 2 helical transmembrane spans lie at Phe-22–Ser-42 and Ile-57–Ser-77.

The protein belongs to the Ycf4 family.

The protein localises to the plastid. It localises to the chloroplast thylakoid membrane. Seems to be required for the assembly of the photosystem I complex. This is Photosystem I assembly protein Ycf4 from Nandina domestica (Heavenly bamboo).